The chain runs to 101 residues: Carboxysome shell vertex protein CcmL (101 aa).

The region spanning 1–84 (MQIAKVRGTV…VDAAVVAIID (84 aa)) is the BMV domain.

This sequence belongs to the CcmL/EutN family. CcmL subfamily. In terms of assembly, homopentamer. Interacts with full-length CcmM.

It localises to the carboxysome. Functionally, probably forms vertices in the carboxysome, a polyhedral inclusion where RuBisCO (ribulose bisphosphate carboxylase, rbcL-rbcS) is sequestered. Has been modeled to induce curvature upon insertion into an otherwise flat hexagonal molecular layer of CcmK subunits. The protein is Carboxysome shell vertex protein CcmL of Nostoc sp. (strain PCC 7120 / SAG 25.82 / UTEX 2576).